A 58-amino-acid chain; its full sequence is Potassium channel toxin alpha-KTx 16.6 (58 aa).

The first 22 residues, 1 to 22 (MKILSVLLIALIICSINICSEA), serve as a signal peptide directing secretion. Intrachain disulfides connect Cys29/Cys50, Cys35/Cys55, and Cys39/Cys57.

Belongs to the short scorpion toxin superfamily. Potassium channel inhibitor family. Alpha-KTx 16 subfamily. In terms of tissue distribution, expressed by the venom gland.

It localises to the secreted. Functionally, inhibits potassium channel. The protein is Potassium channel toxin alpha-KTx 16.6 of Buthus israelis (Israeli scorpion).